A 524-amino-acid polypeptide reads, in one-letter code: Cytochrome P450 52A6 (524 aa).

A helical transmembrane segment spans residues Trp-17–Ile-34. Cys-472 lines the heme pocket.

This sequence belongs to the cytochrome P450 family. The cofactor is heme.

The protein resides in the membrane. In terms of biological role, together with an NADPH cytochrome P450 the enzyme system catalyzes the terminal hydroxylation as the first step in the assimilation of alkanes and fatty acids. Preferentially hydroxylates hexadecane. This Candida tropicalis (Yeast) protein is Cytochrome P450 52A6 (CYP52A6).